Here is a 492-residue protein sequence, read N- to C-terminus: Cytoplasmic dynein 1 light intermediate chain 2 (492 aa).

61–68 (GEDGSGKT) is an ATP binding site. 3 disordered regions span residues 187–206 (PEEG…SGSD), 371–423 (AKQP…KNNA), and 437–492 (LSKK…ENEA). The residue at position 194 (Ser194) is a Phosphoserine. The segment covering 371–381 (AKQPATPTRAS) has biased composition (polar residues). Phosphoserine occurs at positions 383 and 391. Arg397 bears the Omega-N-methylarginine mark. The span at 400–412 (PASVPSSSPGTSV) shows a compositional bias: low complexity. Thr441 bears the Phosphothreonine mark. A phosphoserine mark is found at Ser443 and Ser446. The span at 452–469 (VQSTAKKSGQKTVLSNVQ) shows a compositional bias: polar residues. Positions 471–480 (ELDRMTRKPD) are enriched in basic and acidic residues. Over residues 482 to 492 (MVTNSSTENEA) the composition is skewed to polar residues.

Belongs to the dynein light intermediate chain family. Homodimer. The cytoplasmic dynein 1 complex consists of two catalytic heavy chains (HCs) and a number of non-catalytic subunits presented by intermediate chains (ICs), light intermediate chains (LICs) and light chains (LCs); the composition seems to vary in respect to the IC, LIC and LC composition. The heavy chain homodimer serves as a scaffold for the probable homodimeric assembly of the respective non-catalytic subunits. The ICs and LICs bind directly to the HC dimer and the LCs assemble on the IC dimer. Interacts with DYNC1H1; DYNC1LI1 and DYNC1LI2 bind mutually exclusive to DYNC1H.

Its subcellular location is the cytoplasm. The protein localises to the cytoskeleton. Its function is as follows. Acts as one of several non-catalytic accessory components of the cytoplasmic dynein 1 complex that are thought to be involved in linking dynein to cargos and to adapter proteins that regulate dynein function. Cytoplasmic dynein 1 acts as a motor for the intracellular retrograde motility of vesicles and organelles along microtubules. May play a role in binding dynein to membranous organelles or chromosomes. The chain is Cytoplasmic dynein 1 light intermediate chain 2 from Homo sapiens (Human).